The chain runs to 116 residues: Alpha-defensin 29 (116 aa).

Residues 1 to 19 (MKTLVLLSALVLPCFQVQA) form the signal peptide. Positions 20-60 (DPIQNTDEETKTEEQPEEEDQAVSVSFGGTEGSALQDVAQR) are excised as a propeptide. The interval 22–44 (IQNTDEETKTEEQPEEEDQAVSV) is disordered. 9 repeat units span residues 65 to 67 (CRK), 68 to 70 (CRV), 71 to 73 (CQK), 74 to 76 (CQV), 77 to 79 (CQK), 80 to 82 (CPV), 83 to 85 (CPT), 86 to 88 (CPQ), and 89 to 91 (CPK). Positions 65-70 (CRKCRV) are 2 X 3 AA tandem repeats of C-R-X. The tract at residues 71 to 79 (CQKCQVCQK) is 3 X 3 AA tandem repeats of C-Q-X. The segment at 80 to 91 (CPVCPTCPQCPK) is 4 X 3 AA tandem repeats of C-P-X.

The protein belongs to the alpha-defensin family. Small bowel.

Its subcellular location is the secreted. Functionally, apparent precursor of a secreted, cationic, proline- and cysteine-rich peptide that contains Cys-Pro-Xaa repeats. Unlike cryptdin, the proposed mature peptide region lacks the structural motif characteristic of defensins. The polypeptide is Alpha-defensin 29 (Mus musculus (Mouse)).